A 490-amino-acid polypeptide reads, in one-letter code: Betaine aldehyde dehydrogenase (490 aa).

Residue Asp93 coordinates K(+). 150 to 152 (GAW) contacts NAD(+). Catalysis depends on Lys162, which acts as the Charge relay system. Position 176–179 (176–179 (KPSE)) interacts with NAD(+). Val180 contributes to the K(+) binding site. 230 to 233 (GIAS) contributes to the NAD(+) binding site. Leu246 provides a ligand contact to K(+). The active-site Proton acceptor is Glu252. The NAD(+) site is built by Gly254, Cys286, and Glu387. Residue Cys286 is the Nucleophile of the active site. Cys286 is subject to Cysteine sulfenic acid (-SOH). Positions 457 and 460 each coordinate K(+). The active-site Charge relay system is Glu464.

It belongs to the aldehyde dehydrogenase family. In terms of assembly, dimer of dimers. K(+) is required as a cofactor.

It carries out the reaction betaine aldehyde + NAD(+) + H2O = glycine betaine + NADH + 2 H(+). The protein operates within amine and polyamine biosynthesis; betaine biosynthesis via choline pathway; betaine from betaine aldehyde: step 1/1. Involved in the biosynthesis of the osmoprotectant glycine betaine. Catalyzes the irreversible oxidation of betaine aldehyde to the corresponding acid. The polypeptide is Betaine aldehyde dehydrogenase (Yersinia pestis).